The primary structure comprises 373 residues: 4-hydroxy-3-methylbut-2-en-1-yl diphosphate synthase (flavodoxin) (373 aa).

[4Fe-4S] cluster contacts are provided by Cys270, Cys273, Cys305, and Glu312.

The protein belongs to the IspG family. [4Fe-4S] cluster is required as a cofactor.

It catalyses the reaction (2E)-4-hydroxy-3-methylbut-2-enyl diphosphate + oxidized [flavodoxin] + H2O + 2 H(+) = 2-C-methyl-D-erythritol 2,4-cyclic diphosphate + reduced [flavodoxin]. It participates in isoprenoid biosynthesis; isopentenyl diphosphate biosynthesis via DXP pathway; isopentenyl diphosphate from 1-deoxy-D-xylulose 5-phosphate: step 5/6. In terms of biological role, converts 2C-methyl-D-erythritol 2,4-cyclodiphosphate (ME-2,4cPP) into 1-hydroxy-2-methyl-2-(E)-butenyl 4-diphosphate. This chain is 4-hydroxy-3-methylbut-2-en-1-yl diphosphate synthase (flavodoxin), found in Photorhabdus laumondii subsp. laumondii (strain DSM 15139 / CIP 105565 / TT01) (Photorhabdus luminescens subsp. laumondii).